Here is a 689-residue protein sequence, read N- to C-terminus: DNA ligase (689 aa).

Residues 32–36, 81–82, and Glu-113 each bind NAD(+); these read DAEYD and SL. The active-site N6-AMP-lysine intermediate is Lys-115. Residues Arg-136, Glu-176, Lys-306, and Lys-330 each coordinate NAD(+). Zn(2+) contacts are provided by Cys-424, Cys-427, Cys-442, and Cys-448. In terms of domain architecture, BRCT spans 606–689; sequence AEELPLAEQI…ALLAEHGITI (84 aa).

Belongs to the NAD-dependent DNA ligase family. LigA subfamily. Requires Mg(2+) as cofactor. Mn(2+) serves as cofactor.

The enzyme catalyses NAD(+) + (deoxyribonucleotide)n-3'-hydroxyl + 5'-phospho-(deoxyribonucleotide)m = (deoxyribonucleotide)n+m + AMP + beta-nicotinamide D-nucleotide.. In terms of biological role, DNA ligase that catalyzes the formation of phosphodiester linkages between 5'-phosphoryl and 3'-hydroxyl groups in double-stranded DNA using NAD as a coenzyme and as the energy source for the reaction. It is essential for DNA replication and repair of damaged DNA. The sequence is that of DNA ligase from Colwellia psychrerythraea (strain 34H / ATCC BAA-681) (Vibrio psychroerythus).